The following is a 236-amino-acid chain: Protein-S-isoprenylcysteine O-methyltransferase (236 aa).

The next 4 helical transmembrane spans lie at 3 to 23, 24 to 44, 76 to 96, and 108 to 128; these read NLHT…LGCV, FGLG…FFAF, AYWL…GKSF, and FLIN…LCLG. S-adenosyl-L-methionine is bound by residues 155–158, tyrosine 163, and 168–171; these read HLLV and HPSY. A helical transmembrane segment spans residues 174 to 194; that stretch reads FFIWALGTQMLLGNFVSTLLF. Arginine 205 provides a ligand contact to substrate. Glutamate 209 contributes to the S-adenosyl-L-methionine binding site.

It belongs to the class VI-like SAM-binding methyltransferase superfamily. Isoprenylcysteine carboxyl methyltransferase family.

The protein localises to the membrane. The enzyme catalyses [protein]-C-terminal S-[(2E,6E)-farnesyl]-L-cysteine + S-adenosyl-L-methionine = [protein]-C-terminal S-[(2E,6E)-farnesyl]-L-cysteine methyl ester + S-adenosyl-L-homocysteine. Functionally, mediates C-terminal methylation of the isoprenylated C-terminal cysteine in M-factor. This is Protein-S-isoprenylcysteine O-methyltransferase (mam4) from Schizosaccharomyces pombe (strain 972 / ATCC 24843) (Fission yeast).